A 196-amino-acid polypeptide reads, in one-letter code: Molybdenum cofactor guanylyltransferase (196 aa).

GTP is bound by residues 10-12, Lys23, Asn51, Asp69, and Asp99; that span reads LAG. Asp99 contributes to the Mg(2+) binding site.

Belongs to the MobA family. As to quaternary structure, monomer. Mg(2+) is required as a cofactor.

The protein resides in the cytoplasm. It catalyses the reaction Mo-molybdopterin + GTP + H(+) = Mo-molybdopterin guanine dinucleotide + diphosphate. Functionally, transfers a GMP moiety from GTP to Mo-molybdopterin (Mo-MPT) cofactor (Moco or molybdenum cofactor) to form Mo-molybdopterin guanine dinucleotide (Mo-MGD) cofactor. The chain is Molybdenum cofactor guanylyltransferase from Shewanella baltica (strain OS155 / ATCC BAA-1091).